The primary structure comprises 200 residues: Putative biotin transporter BioYB (200 aa).

6 helical membrane passes run 13–33 (LIGM…VAPF), 36–56 (VAGI…LLLG), 61–81 (AIAM…FAQF), 90–110 (GKSG…GWFL), 121–141 (FLIA…TYMY), and 158–178 (WGFM…LSFI).

It belongs to the BioY family.

It localises to the cell membrane. In terms of biological role, putative biotin transporter. This Bacillus subtilis (strain 168) protein is Putative biotin transporter BioYB (bioYB).